A 611-amino-acid chain; its full sequence is Phosphoenolpyruvate carboxykinase [GTP] (611 aa).

Substrate contacts are provided by residues Arg-82 and 222–224 (YGG). Mn(2+) is bound by residues Lys-231 and His-251. A substrate-binding site is contributed by Ser-273. 274–279 (ACGKTN) contributes to the GTP binding site. Residue Cys-275 is part of the active site. Asp-298 serves as a coordination point for Mn(2+). 389–391 (NSR) provides a ligand contact to substrate. GTP-binding positions include Arg-391, Arg-422, and 517–520 (FGDN).

The protein belongs to the phosphoenolpyruvate carboxykinase [GTP] family. In terms of assembly, monomer. The cofactor is Mn(2+).

Its subcellular location is the cytoplasm. It catalyses the reaction oxaloacetate + GTP = phosphoenolpyruvate + GDP + CO2. It participates in carbohydrate biosynthesis; gluconeogenesis. Catalyzes the conversion of oxaloacetate (OAA) to phosphoenolpyruvate (PEP), the rate-limiting step in the metabolic pathway that produces glucose from lactate and other precursors derived from the citric acid cycle. This is Phosphoenolpyruvate carboxykinase [GTP] from Arthrobacter sp. (strain FB24).